A 952-amino-acid chain; its full sequence is Aminopeptidase 2, mitochondrial (952 aa).

The transit peptide at 1–52 (MPIVRWLLLKSAVRGSSLIGKAHPCLRSIAAHPRYLSNVYSPPAGVSRSLRI) directs the protein to the mitochondrion. Substrate-binding positions include Glu-228 and 360–364 (GAMEN). N-linked (GlcNAc...) asparagine glycosylation occurs at Asn-381. His-396 contributes to the Zn(2+) binding site. Glu-397 serves as the catalytic Proton acceptor. Zn(2+) contacts are provided by His-400 and Glu-419. The N-linked (GlcNAc...) asparagine glycan is linked to Asn-713.

This sequence belongs to the peptidase M1 family. It depends on Zn(2+) as a cofactor.

Its subcellular location is the periplasm. The protein resides in the cytoplasm. The protein localises to the mitochondrion. Its function is as follows. Involved in the cellular supply of leucine from externally offered leucine-containing dipeptide substrates. The polypeptide is Aminopeptidase 2, mitochondrial (APE2) (Saccharomyces cerevisiae (strain ATCC 204508 / S288c) (Baker's yeast)).